The following is a 406-amino-acid chain: Multifunctional CCA protein (406 aa).

Gly-8 and Arg-11 together coordinate ATP. CTP contacts are provided by Gly-8 and Arg-11. Residues Asp-21 and Asp-23 each coordinate Mg(2+). Positions 91, 138, and 141 each coordinate ATP. CTP contacts are provided by Arg-91, Arg-138, and Arg-141. Residues 229 to 331 enclose the HD domain; sequence TGIHQEMVSD…LELLGRCDAL (103 aa).

This sequence belongs to the tRNA nucleotidyltransferase/poly(A) polymerase family. Bacterial CCA-adding enzyme type 1 subfamily. As to quaternary structure, monomer. Can also form homodimers and oligomers. It depends on Mg(2+) as a cofactor. Requires Ni(2+) as cofactor.

It catalyses the reaction a tRNA precursor + 2 CTP + ATP = a tRNA with a 3' CCA end + 3 diphosphate. The catalysed reaction is a tRNA with a 3' CCA end + 2 CTP + ATP = a tRNA with a 3' CCACCA end + 3 diphosphate. Its function is as follows. Catalyzes the addition and repair of the essential 3'-terminal CCA sequence in tRNAs without using a nucleic acid template. Adds these three nucleotides in the order of C, C, and A to the tRNA nucleotide-73, using CTP and ATP as substrates and producing inorganic pyrophosphate. tRNA 3'-terminal CCA addition is required both for tRNA processing and repair. Also involved in tRNA surveillance by mediating tandem CCA addition to generate a CCACCA at the 3' terminus of unstable tRNAs. While stable tRNAs receive only 3'-terminal CCA, unstable tRNAs are marked with CCACCA and rapidly degraded. This chain is Multifunctional CCA protein, found in Stenotrophomonas maltophilia (strain K279a).